We begin with the raw amino-acid sequence, 156 residues long: Large ribosomal subunit protein uL11 (156 aa).

The interval methionine 1–isoleucine 20 is disordered.

The protein belongs to the universal ribosomal protein uL11 family. Part of the ribosomal stalk of the 50S ribosomal subunit. Interacts with L10 and the large rRNA to form the base of the stalk. L10 forms an elongated spine to which L12 dimers bind in a sequential fashion forming a multimeric L10(L12)X complex.

Its function is as follows. Forms part of the ribosomal stalk which helps the ribosome interact with GTP-bound translation factors. This Thermoplasma acidophilum (strain ATCC 25905 / DSM 1728 / JCM 9062 / NBRC 15155 / AMRC-C165) protein is Large ribosomal subunit protein uL11.